A 316-amino-acid chain; its full sequence is Olfactory receptor 8J1 (316 aa).

At 1 to 25 (MAPENFTRVTEFILTGVSSCPELQI) the chain is on the extracellular side. Asparagine 5 is a glycosylation site (N-linked (GlcNAc...) asparagine). Residues 26 to 46 (PLFLVFLVLYGLTMAGNLGII) form a helical membrane-spanning segment. The Cytoplasmic segment spans residues 47–54 (TLTSVDSR). The helical transmembrane segment at 55-75 (LQTPMYFFLQHLALINLGNST) threads the bilayer. Residues 76 to 99 (VIAPKMLINFLVKKKTTSFYECAT) lie on the Extracellular side of the membrane. Residues cysteine 97 and cysteine 189 are joined by a disulfide bond. Residues 100 to 120 (QLGGFLFFIVSEVIMLALMAY) form a helical membrane-spanning segment. The Cytoplasmic segment spans residues 121–139 (DRYVAICNPLLYMVVVSRR). Residues 140–160 (LCLLLVSLTYLYGFSTAIVVS) form a helical membrane-spanning segment. The Extracellular segment spans residues 161–197 (SYVFSVSYCSSNIINHFYCDNVPLLALSCSDTYLPET). Residues 198–217 (VVFISAATNVVGSLIIVLVS) form a helical membrane-spanning segment. Over 218–237 (YFNIVLSILKICSSEGRKKA) the chain is Cytoplasmic. Residues 238 to 258 (FSTCASHMMAVTIFYGTLLFM) form a helical membrane-spanning segment. Residues 259-272 (YVQPRSNHSLDTDD) lie on the Extracellular side of the membrane. The chain crosses the membrane as a helical span at residues 273-293 (KMASVFYTLVIPMLNPLIYSL). Residues 294-316 (RNKDVKTALQRFMTNLCYSFKTM) are Cytoplasmic-facing.

Belongs to the G-protein coupled receptor 1 family.

The protein localises to the cell membrane. Its function is as follows. Odorant receptor. This Homo sapiens (Human) protein is Olfactory receptor 8J1 (OR8J1).